Consider the following 154-residue polypeptide: OCIA domain-containing protein 2 (154 aa).

The segment at 1–23 is disordered; that stretch reads MASVSTHENQEKGPHLPPPSKQS. Positions 1–120 constitute an OCIA domain; sequence MASVSTHENQ…HSFEGQLRGA (120 aa). Lys41 carries the N6-acetyllysine modification.

Interacts (via OCIA domain) with OCIAD1/ASRIJ and STAT3.

The protein localises to the endosome. The protein resides in the mitochondrion. It is found in the mitochondrion inner membrane. Functionally, has an essential role in the assembly of mitochondrial respiratory chain complex III. Is also required for STAT3 activation and plays a role in cell migration. This is OCIA domain-containing protein 2 (OCIAD2) from Bos taurus (Bovine).